A 210-amino-acid polypeptide reads, in one-letter code: Na(+)-translocating NADH-quinone reductase subunit D (210 aa).

The next 6 helical transmembrane spans lie at isoleucine 11–alanine 31, phenylalanine 42–isoleucine 62, valine 70–leucine 90, valine 103–methionine 123, phenylalanine 131–phenylalanine 151, and asparagine 178–isoleucine 198.

Belongs to the NqrDE/RnfAE family. In terms of assembly, composed of six subunits; NqrA, NqrB, NqrC, NqrD, NqrE and NqrF.

The protein resides in the cell inner membrane. It catalyses the reaction a ubiquinone + n Na(+)(in) + NADH + H(+) = a ubiquinol + n Na(+)(out) + NAD(+). Its function is as follows. NQR complex catalyzes the reduction of ubiquinone-1 to ubiquinol by two successive reactions, coupled with the transport of Na(+) ions from the cytoplasm to the periplasm. NqrA to NqrE are probably involved in the second step, the conversion of ubisemiquinone to ubiquinol. This Vibrio anguillarum (Listonella anguillarum) protein is Na(+)-translocating NADH-quinone reductase subunit D.